Here is a 280-residue protein sequence, read N- to C-terminus: Large ribosomal subunit protein uL2 (280 aa).

The disordered stretch occupies residues 226–280 (NPIDHPHGGGEGRTSGGRHPVTPWGKPTKGAKTRNKKKASSQLIIRSRHAKKKGR). 2 stretches are compositionally biased toward basic residues: residues 254-264 (KGAKTRNKKKA) and 271-280 (RSRHAKKKGR).

Belongs to the universal ribosomal protein uL2 family. As to quaternary structure, part of the 50S ribosomal subunit. Forms a bridge to the 30S subunit in the 70S ribosome.

Functionally, one of the primary rRNA binding proteins. Required for association of the 30S and 50S subunits to form the 70S ribosome, for tRNA binding and peptide bond formation. It has been suggested to have peptidyltransferase activity; this is somewhat controversial. Makes several contacts with the 16S rRNA in the 70S ribosome. This Roseobacter denitrificans (strain ATCC 33942 / OCh 114) (Erythrobacter sp. (strain OCh 114)) protein is Large ribosomal subunit protein uL2.